The following is a 407-amino-acid chain: Argininosuccinate synthase (407 aa).

ATP contacts are provided by residues 16–24 and Ala44; that span reads AYSGGLDTS. L-citrulline contacts are provided by Tyr96 and Ser101. Gly126 is an ATP binding site. Thr128, Asn132, and Asp133 together coordinate L-aspartate. L-citrulline is bound at residue Asn132. Residues Arg136, Ser185, Ser194, Glu270, and Tyr282 each contribute to the L-citrulline site.

The protein belongs to the argininosuccinate synthase family. Type 1 subfamily. As to quaternary structure, homotetramer.

It is found in the cytoplasm. It catalyses the reaction L-citrulline + L-aspartate + ATP = 2-(N(omega)-L-arginino)succinate + AMP + diphosphate + H(+). It participates in amino-acid biosynthesis; L-arginine biosynthesis; L-arginine from L-ornithine and carbamoyl phosphate: step 2/3. The polypeptide is Argininosuccinate synthase (Shewanella oneidensis (strain ATCC 700550 / JCM 31522 / CIP 106686 / LMG 19005 / NCIMB 14063 / MR-1)).